We begin with the raw amino-acid sequence, 954 residues long: Leucine--tRNA ligase (954 aa).

The 'HIGH' region motif lies at 67 to 78; the sequence is PYPSGAGLHVGH. The 'KMSKS' region signature appears at 729–733; the sequence is KMGKS. K732 lines the ATP pocket.

It belongs to the class-I aminoacyl-tRNA synthetase family.

It is found in the cytoplasm. It catalyses the reaction tRNA(Leu) + L-leucine + ATP = L-leucyl-tRNA(Leu) + AMP + diphosphate. In Salinispora tropica (strain ATCC BAA-916 / DSM 44818 / JCM 13857 / NBRC 105044 / CNB-440), this protein is Leucine--tRNA ligase.